The primary structure comprises 471 residues: Methyltransferase OMS1, mitochondrial (471 aa).

The N-terminal 39 residues, 1–39 (MIVFRRFPTCLLHHIRQPASRSLLLESQRRSLSFTSYKY), are a transit peptide targeting the mitochondrion. Over 40–103 (NSSHIDDDKS…AIARSEKFSK (64 aa)) the chain is Mitochondrial matrix. The helical transmembrane segment at 104 to 123 (GMTKYMIGAYVIFLIYGLFF) threads the bilayer. The Mitochondrial intermembrane portion of the chain corresponds to 124–471 (TKKLFAKDKE…LEPVPPVSKS (348 aa)). Basic and acidic residues predominate over residues 450–463 (FEKKDDMASKKELE). The segment at 450 to 471 (FEKKDDMASKKELEPVPPVSKS) is disordered.

It belongs to the methyltransferase superfamily. METL family.

It is found in the mitochondrion inner membrane. In terms of biological role, mitochondrial methyltransferase which suppresses respiratory defects caused by OXA1 mutations when overexpressed. The protein is Methyltransferase OMS1, mitochondrial (OMS1) of Saccharomyces cerevisiae (strain ATCC 204508 / S288c) (Baker's yeast).